The sequence spans 390 residues: Phosphopentomutase (390 aa).

Mn(2+) contacts are provided by D14, D286, H291, D327, H328, and H339.

Belongs to the phosphopentomutase family. Mn(2+) serves as cofactor.

The protein resides in the cytoplasm. It catalyses the reaction 2-deoxy-alpha-D-ribose 1-phosphate = 2-deoxy-D-ribose 5-phosphate. The catalysed reaction is alpha-D-ribose 1-phosphate = D-ribose 5-phosphate. It participates in carbohydrate degradation; 2-deoxy-D-ribose 1-phosphate degradation; D-glyceraldehyde 3-phosphate and acetaldehyde from 2-deoxy-alpha-D-ribose 1-phosphate: step 1/2. Its function is as follows. Isomerase that catalyzes the conversion of deoxy-ribose 1-phosphate (dRib-1-P) and ribose 1-phosphate (Rib-1-P) to deoxy-ribose 5-phosphate (dRib-5-P) and ribose 5-phosphate (Rib-5-P), respectively. This is Phosphopentomutase from Exiguobacterium sibiricum (strain DSM 17290 / CCUG 55495 / CIP 109462 / JCM 13490 / 255-15).